The chain runs to 855 residues: Putative AAA family ATPase R476 (855 aa).

Positions 1 to 13 (MNKRDFSELKNSE) are enriched in basic and acidic residues. The interval 1 to 37 (MNKRDFSELKNSESSEESSLVSSTETVRSSKRNKKFH) is disordered. Low complexity predominate over residues 17–27 (ESSLVSSTETV). Residue 610 to 617 (GPPGTGKT) coordinates ATP.

It belongs to the AAA ATPase family.

The sequence is that of Putative AAA family ATPase R476 from Acanthamoeba polyphaga mimivirus (APMV).